The chain runs to 104 residues: Iron-sulfur cluster assembly protein CyaY (104 aa).

The protein belongs to the frataxin family.

Functionally, involved in iron-sulfur (Fe-S) cluster assembly. May act as a regulator of Fe-S biogenesis. This Aliivibrio salmonicida (strain LFI1238) (Vibrio salmonicida (strain LFI1238)) protein is Iron-sulfur cluster assembly protein CyaY.